The primary structure comprises 709 residues: Protein transport protein SEC39 (709 aa).

This sequence belongs to the SEC39 family. Component of a peripheral membrane protein complex consisting of DSL1, SEC39/DSL3 and TIP20. Bound to a SNARE complex consisting of UFE1, USE1, SEC20 and SEC22 or YKT6 through direct interaction of TIP20 with SEC20. Interacts with TIP20 and DSL1.

It localises to the endoplasmic reticulum membrane. Functionally, required for protein transport between the Golgi and the endoplasmic reticulum. May contribute to tethering of coatomer-coated retrograde transport vesicles to the ER membrane through interaction with and stabilization of the SNARE complex. This chain is Protein transport protein SEC39, found in Saccharomyces cerevisiae (strain ATCC 204508 / S288c) (Baker's yeast).